Here is a 438-residue protein sequence, read N- to C-terminus: 23S rRNA (uracil(1939)-C(5))-methyltransferase RlmD (438 aa).

Positions 10–69 constitute a TRAM domain; sequence KASVNTKHQSVDVVRLDHNGAGIAFVDKKPVFIEGALPGEKAIIQFIEQKKQFSRAKLIK. Positions 82, 88, 91, and 169 each coordinate [4Fe-4S] cluster. Glutamine 272, phenylalanine 301, asparagine 306, glutamate 322, asparagine 349, and aspartate 370 together coordinate S-adenosyl-L-methionine. The active-site Nucleophile is the cysteine 396.

Belongs to the class I-like SAM-binding methyltransferase superfamily. RNA M5U methyltransferase family. RlmD subfamily.

It catalyses the reaction uridine(1939) in 23S rRNA + S-adenosyl-L-methionine = 5-methyluridine(1939) in 23S rRNA + S-adenosyl-L-homocysteine + H(+). In terms of biological role, catalyzes the formation of 5-methyl-uridine at position 1939 (m5U1939) in 23S rRNA. The chain is 23S rRNA (uracil(1939)-C(5))-methyltransferase RlmD from Aliivibrio fischeri (strain ATCC 700601 / ES114) (Vibrio fischeri).